A 121-amino-acid chain; its full sequence is Large ribosomal subunit protein uL18 (121 aa).

This sequence belongs to the universal ribosomal protein uL18 family. In terms of assembly, part of the 50S ribosomal subunit; part of the 5S rRNA/L5/L18/L25 subcomplex. Contacts the 5S and 23S rRNAs.

Functionally, this is one of the proteins that bind and probably mediate the attachment of the 5S RNA into the large ribosomal subunit, where it forms part of the central protuberance. The chain is Large ribosomal subunit protein uL18 from Geobacter metallireducens (strain ATCC 53774 / DSM 7210 / GS-15).